A 257-amino-acid polypeptide reads, in one-letter code: 4-hydroxy-tetrahydrodipicolinate reductase (257 aa).

NAD(+)-binding positions include 8–13, 90–92, and 114–117; these read GSTGRV, ATT, and ATNM. His146 serves as the catalytic Proton donor/acceptor. Residue His147 coordinates (S)-2,3,4,5-tetrahydrodipicolinate. The Proton donor role is filled by Lys150. 156-157 contacts (S)-2,3,4,5-tetrahydrodipicolinate; that stretch reads GT.

This sequence belongs to the DapB family.

It is found in the cytoplasm. The catalysed reaction is (S)-2,3,4,5-tetrahydrodipicolinate + NAD(+) + H2O = (2S,4S)-4-hydroxy-2,3,4,5-tetrahydrodipicolinate + NADH + H(+). The enzyme catalyses (S)-2,3,4,5-tetrahydrodipicolinate + NADP(+) + H2O = (2S,4S)-4-hydroxy-2,3,4,5-tetrahydrodipicolinate + NADPH + H(+). The protein operates within amino-acid biosynthesis; L-lysine biosynthesis via DAP pathway; (S)-tetrahydrodipicolinate from L-aspartate: step 4/4. Functionally, catalyzes the conversion of 4-hydroxy-tetrahydrodipicolinate (HTPA) to tetrahydrodipicolinate. In Aliarcobacter butzleri (strain RM4018) (Arcobacter butzleri), this protein is 4-hydroxy-tetrahydrodipicolinate reductase.